Reading from the N-terminus, the 246-residue chain is 5'-nucleotidase SurE (246 aa).

Positions 8, 9, 39, and 91 each coordinate a divalent metal cation.

This sequence belongs to the SurE nucleotidase family. A divalent metal cation serves as cofactor.

It localises to the cytoplasm. The enzyme catalyses a ribonucleoside 5'-phosphate + H2O = a ribonucleoside + phosphate. Functionally, nucleotidase that shows phosphatase activity on nucleoside 5'-monophosphates. The protein is 5'-nucleotidase SurE of Dechloromonas aromatica (strain RCB).